The chain runs to 249 residues: Transcriptional activator protein EsaR (249 aa).

The HTH luxR-type domain occupies 174–239; the sequence is QSADKTIFSS…QAIRLGVELD (66 aa). Residues 198–217 constitute a DNA-binding region (H-T-H motif); it reads YAEIAAITGISVSTVKFHIK.

The protein belongs to the autoinducer-regulated transcriptional regulatory protein family.

Functionally, functions as a potential OhlL-responsive transcriptional regulator. The polypeptide is Transcriptional activator protein EsaR (esaR) (Pantoea stewartii subsp. stewartii (Erwinia stewartii)).